A 220-amino-acid chain; its full sequence is Phosphatidylserine decarboxylase proenzyme (220 aa).

Ser188 acts as the Schiff-base intermediate with substrate; via pyruvic acid in catalysis. A Pyruvic acid (Ser); by autocatalysis modification is found at Ser188.

The protein belongs to the phosphatidylserine decarboxylase family. PSD-A subfamily. Heterodimer of a large membrane-associated beta subunit and a small pyruvoyl-containing alpha subunit. Pyruvate serves as cofactor. Is synthesized initially as an inactive proenzyme. Formation of the active enzyme involves a self-maturation process in which the active site pyruvoyl group is generated from an internal serine residue via an autocatalytic post-translational modification. Two non-identical subunits are generated from the proenzyme in this reaction, and the pyruvate is formed at the N-terminus of the alpha chain, which is derived from the carboxyl end of the proenzyme. The post-translation cleavage follows an unusual pathway, termed non-hydrolytic serinolysis, in which the side chain hydroxyl group of the serine supplies its oxygen atom to form the C-terminus of the beta chain, while the remainder of the serine residue undergoes an oxidative deamination to produce ammonia and the pyruvoyl prosthetic group on the alpha chain.

The protein localises to the cell membrane. It catalyses the reaction a 1,2-diacyl-sn-glycero-3-phospho-L-serine + H(+) = a 1,2-diacyl-sn-glycero-3-phosphoethanolamine + CO2. The protein operates within phospholipid metabolism; phosphatidylethanolamine biosynthesis; phosphatidylethanolamine from CDP-diacylglycerol: step 2/2. In terms of biological role, catalyzes the formation of phosphatidylethanolamine (PtdEtn) from phosphatidylserine (PtdSer). In Parabacteroides distasonis (strain ATCC 8503 / DSM 20701 / CIP 104284 / JCM 5825 / NCTC 11152), this protein is Phosphatidylserine decarboxylase proenzyme.